The sequence spans 720 residues: Nucleoporin NUP2 (720 aa).

A disordered region spans residues Met-1–Ser-33. Phosphoserine occurs at positions 17 and 20. An interaction with SRP1 NLS binding site 1 region spans residues Val-35–Phe-50. Disordered regions lie at residues Pro-52–Arg-92 and Lys-136–Asn-278. The FXF 1 repeat unit spans residues Phe-67 to Phe-69. Residues Val-81–Arg-92 show a composition bias toward polar residues. Ser-137 carries the post-translational modification Phosphoserine. The segment covering Asn-147–Lys-159 has biased composition (basic and acidic residues). Ser-165 bears the Phosphoserine mark. The stretch at Phe-189–Gly-192 is one FXFG 1 repeat. The span at Pro-193–Glu-202 shows a compositional bias: basic and acidic residues. A phosphoserine mark is found at Ser-203 and Ser-205. 2 FXF repeats span residues Phe-216 to Phe-218 and Phe-247 to Phe-249. Polar residues predominate over residues Asn-243–Asn-278. 3 FXFG repeats span residues Phe-285–Gly-288, Phe-302–Gly-305, and Phe-318–Gly-321. A compositionally biased stretch (polar residues) spans Lys-315–Thr-324. The tract at residues Lys-315–Glu-604 is disordered. Residues Ser-345–Asn-360 are compositionally biased toward low complexity. Phosphoserine occurs at positions 348 and 351. The FXF 4 repeat unit spans residues Phe-352–Phe-354. Thr-361 carries the phosphothreonine modification. One copy of the FXFG 5 repeat lies at Phe-369 to Gly-372. The segment covering Val-373–Pro-384 has biased composition (polar residues). An FXFG 6 repeat occupies Phe-386 to Gly-389. Positions Thr-424–Lys-435 are enriched in basic and acidic residues. FXFG repeat units follow at residues Phe-438–Gly-441, Phe-474–Gly-477, Phe-493–Gly-496, Phe-511–Gly-514, and Phe-524–Gly-527. Low complexity predominate over residues Asn-479–Phe-495. A compositionally biased stretch (polar residues) spans Phe-513 to Leu-533. Residues Pro-534 to Thr-548 are compositionally biased toward low complexity. Residues Phe-550 to Phe-552 form an FXF 5 repeat. A compositionally biased stretch (polar residues) spans Thr-574–Ala-584. At Ser-581 the chain carries Phosphoserine. The 138-residue stretch at Asp-583–Lys-720 folds into the RanBD1 domain. A Phosphothreonine modification is found at Thr-590.

In terms of assembly, component of the nuclear pore complex (NPC). NPC constitutes the exclusive means of nucleocytoplasmic transport. NPCs allow the passive diffusion of ions and small molecules and the active, nuclear transport receptor-mediated bidirectional transport of macromolecules such as proteins, RNAs, ribonucleoparticles (RNPs), and ribosomal subunits across the nuclear envelope. Due to its 8-fold rotational symmetry, all subunits are present with 8 copies or multiples thereof. Binds to the nuclear basket of the NPC through NUP60 in a (GSP1, GSP2) GTPase-GTP-dependent manner. Interacts through its FG repeats with nuclear transport factors. Interacts with KAP122.

The protein resides in the nucleus. The protein localises to the nuclear pore complex. It is found in the nucleus membrane. Functions as a component of the nuclear pore complex (NPC). NPC components, collectively referred to as nucleoporins (NUPs), can play the role of both NPC structural components and of docking or interaction partners for transiently associated nuclear transport factors. Active directional transport is assured by both, a Phe-Gly (FG) repeat affinity gradient for these transport factors across the NPC and a transport cofactor concentration gradient across the nuclear envelope (GSP1 and GSP2 GTPases associated predominantly with GTP in the nucleus, with GDP in the cytoplasm). As one of the FG repeat nucleoporins NUP2 is involved in interactions with and guidance of nuclear transport receptors such as SRP1-KAP95 (importin alpha and beta) through the NPC. Like the closely related NUP1 it also plays an important role in disassembling and recycling SRP1-KAP95 to the cytoplasm after nuclear import. Upon entry of the heterotrimeric SRP1-KAP95-cargo complex in the nucleus, NUP2 binds through its N-terminus to the SRP1 nuclear localization signal (NLS) binding site, thus accelerating the release of the NLS-cargo. SRP1 in turn is released from NUP2 by binding of the GSP1-GTP associated export factor CSE1. NUP2 may also have a chromatin boundary/insulator activity through indirect interaction with genomic DNA via CSE1 and blocking of heterochromatin spreading. This Saccharomyces cerevisiae (strain ATCC 204508 / S288c) (Baker's yeast) protein is Nucleoporin NUP2 (NUP2).